Here is a 259-residue protein sequence, read N- to C-terminus: Protein N-terminal and lysine N-methyltransferase efm7 (259 aa).

S-adenosyl-L-methionine contacts are provided by residues W56, 83–85, D105, W139, and A163; that span reads GAA.

The protein belongs to the class I-like SAM-binding methyltransferase superfamily. EFM7 family.

It is found in the cytoplasm. In terms of biological role, S-adenosyl-L-methionine-dependent protein methyltransferase that trimethylates the N-terminal glycine 'Gly-2' of elongation factor 1-alpha, before also catalyzing the mono- and dimethylation of 'Lys-3'. This Aspergillus fumigatus (strain ATCC MYA-4609 / CBS 101355 / FGSC A1100 / Af293) (Neosartorya fumigata) protein is Protein N-terminal and lysine N-methyltransferase efm7.